Consider the following 134-residue polypeptide: Holo-[acyl-carrier-protein] synthase (134 aa).

Aspartate 8 and glutamate 57 together coordinate Mg(2+).

The protein belongs to the P-Pant transferase superfamily. AcpS family. It depends on Mg(2+) as a cofactor.

The protein resides in the cytoplasm. It catalyses the reaction apo-[ACP] + CoA = holo-[ACP] + adenosine 3',5'-bisphosphate + H(+). In terms of biological role, transfers the 4'-phosphopantetheine moiety from coenzyme A to a Ser of acyl-carrier-protein. This chain is Holo-[acyl-carrier-protein] synthase, found in Brucella abortus (strain S19).